A 247-amino-acid polypeptide reads, in one-letter code: UPF0259 membrane protein BUAPTUC7_273 (247 aa).

Transmembrane regions (helical) follow at residues 20 to 40 (IGAI…IDMF), 85 to 105 (IMES…LISF), 114 to 134 (IVSS…LNFL), 137 to 157 (FIIQ…SIIL), 188 to 208 (IIGP…MLLA), and 218 to 238 (LFLI…IYLF).

This sequence belongs to the UPF0259 family.

It localises to the cell membrane. The chain is UPF0259 membrane protein BUAPTUC7_273 from Buchnera aphidicola subsp. Acyrthosiphon pisum (strain Tuc7).